The sequence spans 428 residues: Adenylosuccinate synthetase (428 aa).

Residues 12-18 (GDEGKGK) and 40-42 (GHT) contribute to the GTP site. Residue Asp-13 is the Proton acceptor of the active site. Asp-13 and Gly-40 together coordinate Mg(2+). Residues 13–16 (DEGK), 38–41 (NAGH), Thr-128, Arg-142, Gln-223, Thr-238, and Arg-302 each bind IMP. The active-site Proton donor is His-41. 298 to 304 (VTTGRPR) is a substrate binding site. GTP contacts are provided by residues Arg-304, 330 to 332 (KLD), and 412 to 414 (GTG).

Belongs to the adenylosuccinate synthetase family. As to quaternary structure, homodimer. Mg(2+) is required as a cofactor.

It localises to the cytoplasm. It carries out the reaction IMP + L-aspartate + GTP = N(6)-(1,2-dicarboxyethyl)-AMP + GDP + phosphate + 2 H(+). Its pathway is purine metabolism; AMP biosynthesis via de novo pathway; AMP from IMP: step 1/2. Functionally, plays an important role in the de novo pathway of purine nucleotide biosynthesis. Catalyzes the first committed step in the biosynthesis of AMP from IMP. The protein is Adenylosuccinate synthetase of Bifidobacterium adolescentis (strain ATCC 15703 / DSM 20083 / NCTC 11814 / E194a).